The sequence spans 1785 residues: Plexin-2 (1785 aa).

The signal sequence occupies residues 1 to 17; the sequence is MLPESVFLLLISHFLRA. The 427-residue stretch at 18 to 444 folds into the Sema domain; it reads VTQPPFETEG…MPYGIILEEL (427 aa). The Extracellular segment spans residues 18–1139; that stretch reads VTQPPFETEG…SDHALPSRLS (1122 aa). Residue N66 is glycosylated (N-linked (GlcNAc...) asparagine). Intrachain disulfides connect C84–C91, C118–C126, C247–C349, C263–C300, C318–C336, C447–C464, C453–C487, C456–C473, and C467–C479. N249 is a glycosylation site (N-linked (GlcNAc...) asparagine). The region spanning 446–488 is the PSI 1 domain; sequence TCSHHSSCTECLVSVDPLCQWCHPTQSCTTSARCTSPVTSQCP. N-linked (GlcNAc...) asparagine glycans are attached at residues N502, N536, and N572. A disulfide bridge links C524 with C544. A PSI 2 domain is found at 577 to 617; sequence DCSGYGTCSSCMSSEYNCAWCSGLHKCSNSCGALEKSKACV. N-linked (GlcNAc...) asparagine glycosylation is found at N679 and N702. The region spanning 707-748 is the PSI 3 domain; it reads SCTNLASDCSSCLALSPSLSCGWCNRQCSHECHESKATAVCD. IPT/TIG domains are found at residues 750–837, 840–924, and 928–1040; these read PRID…LYSF, TSIF…PFEY, and PSIS…LSPF. Residues N864, N886, N984, and N1016 are each glycosylated (N-linked (GlcNAc...) asparagine). Residues 1140-1160 traverse the membrane as a helical segment; that stretch reads LLILGLLLFIVVTLTVMCLVF. Positions 1159-1197 form a coiled coil; the sequence is VFKRRRQEREKEYRKIQLQMENLENNVRKECKQAFAELQ. At 1161-1785 the chain is on the cytoplasmic side; sequence KRRRQEREKE…HIYSTISDYE (625 aa).

This sequence belongs to the plexin family. Interacts with mab-20. In terms of tissue distribution, expressed predominantly in the central nervous system from embryonic to adult stages. Expressed in early embryos in ventral neuroblasts. Expressed in neurons and in a subset of posterior lateral and ventral epidermal cells following epidermal enclosure. Present in neurons, muscles and weakly expressed in epidermal cells of the larval tail.

The protein localises to the cell membrane. Involved as a receptor for mab-20/sema-2a in the formation or stabilization of cell-cell contacts at several stages of epithelial morphogenesis. In early embryonic development, required for proper ventral closure of the epidermis. During male tail morphogenesis, involved in precursor cell sorting and in the formation of distinct sensory rays. Involved in axon guidance of SDQL neurons during neurogenesis. Probably in response to stimulation by mab-20, regulates fln-1-mediated remodeling of the actin cytoskeleton and thus axon guidance and/or fasciculation of DD/VD neurons. This Caenorhabditis elegans protein is Plexin-2.